Here is a 382-residue protein sequence, read N- to C-terminus: MQDAAPRLTFTLRDEERLMMKIGVFVPIGNNGWLISTHAPQYMPTFELNKAIVQKAEHYHFDFALSMIKLRGFGGKTEFWDHNLESFTLMAGLAAVTSRIQIYATAATLTLPPAIVARMAATIDSISGGRFGVNLVTGWQKPEYEQMGIWPGDDYFSRRYDYLTEYVQVLRDLWGTGKSDFKGDFFTMNDCRVSPQPSVPMKVICAGQSDAGMAFSAQYADFNFCFGKGVNTPTAFAPTAARMKQAAEQTGRDVGSYVLFMVIADETDDAARAKWEHYKAGADEEALSWLTEQSQKDTRSGTDTNVRQMADPTSAVNINMGTLVGSYASVARMLDEVASVPGAEGVLLTFDDFLSGIETFGERIQPLMQCRAHLPVLTQEVA.

Residues 68-69, asparagine 134, glutamate 143, 159-160, and serine 209 contribute to the FMN site; these read IK and RY.

It belongs to the NtaA/SnaA/DszA monooxygenase family. RutA subfamily.

It catalyses the reaction uracil + FMNH2 + NADH + O2 = (Z)-3-ureidoacrylate + FMN + NAD(+) + H2O + H(+). The catalysed reaction is thymine + FMNH2 + NADH + O2 = (Z)-2-methylureidoacrylate + FMN + NAD(+) + H2O + H(+). In terms of biological role, catalyzes the pyrimidine ring opening between N-3 and C-4 by an unusual flavin hydroperoxide-catalyzed mechanism, adding oxygen atoms in the process to yield ureidoacrylate peracid, that immediately reacts with FMN forming ureidoacrylate and FMN-N(5)-oxide. The FMN-N(5)-oxide reacts spontaneously with NADH to produce FMN. Requires the flavin reductase RutF to regenerate FMN in vivo. This Escherichia coli O55:H7 (strain CB9615 / EPEC) protein is Pyrimidine monooxygenase RutA.